The following is a 159-amino-acid chain: NAD(P)H-quinone oxidoreductase subunit J, chloroplastic (159 aa).

Belongs to the complex I 30 kDa subunit family. As to quaternary structure, NDH is composed of at least 16 different subunits, 5 of which are encoded in the nucleus.

The protein localises to the plastid. It localises to the chloroplast thylakoid membrane. The enzyme catalyses a plastoquinone + NADH + (n+1) H(+)(in) = a plastoquinol + NAD(+) + n H(+)(out). It catalyses the reaction a plastoquinone + NADPH + (n+1) H(+)(in) = a plastoquinol + NADP(+) + n H(+)(out). In terms of biological role, NDH shuttles electrons from NAD(P)H:plastoquinone, via FMN and iron-sulfur (Fe-S) centers, to quinones in the photosynthetic chain and possibly in a chloroplast respiratory chain. The immediate electron acceptor for the enzyme in this species is believed to be plastoquinone. Couples the redox reaction to proton translocation, and thus conserves the redox energy in a proton gradient. This chain is NAD(P)H-quinone oxidoreductase subunit J, chloroplastic, found in Agrostis stolonifera (Creeping bentgrass).